Here is a 182-residue protein sequence, read N- to C-terminus: MKQLLDFIPLIIFFTVYKLHDIYAATGALMATTLLQMIVVWVMYKKLERSHWITLVLVLGFGAMTLFFHNEAFIKWKVTVLYAAFGSALWISQFLFRKPLIKKMLGKEMSLPDAVWNRINFSWGLFFWMVGALNVYIAFYLPTEIWVDFKVFGVLGLMLVSTLLTGIYIYRYLPTNNQQDKE.

5 consecutive transmembrane segments (helical) span residues 22–42, 53–73, 76–96, 121–141, and 149–169; these read IYAA…VVWV, ITLV…NEAF, WKVT…QFLF, FSWG…AFYL, and FKVF…GIYI.

The protein belongs to the YciB family.

The protein localises to the cell inner membrane. Functionally, plays a role in cell envelope biogenesis, maintenance of cell envelope integrity and membrane homeostasis. In Tolumonas auensis (strain DSM 9187 / NBRC 110442 / TA 4), this protein is Inner membrane-spanning protein YciB.